A 291-amino-acid chain; its full sequence is 2-C-methyl-D-erythritol 4-phosphate cytidylyltransferase (291 aa).

A disordered region spans residues 1–23 (MTERDFDTPVETPTVQPAPAQGT).

This sequence belongs to the IspD/TarI cytidylyltransferase family. IspD subfamily.

The enzyme catalyses 2-C-methyl-D-erythritol 4-phosphate + CTP + H(+) = 4-CDP-2-C-methyl-D-erythritol + diphosphate. It participates in isoprenoid biosynthesis; isopentenyl diphosphate biosynthesis via DXP pathway; isopentenyl diphosphate from 1-deoxy-D-xylulose 5-phosphate: step 2/6. Functionally, catalyzes the formation of 4-diphosphocytidyl-2-C-methyl-D-erythritol from CTP and 2-C-methyl-D-erythritol 4-phosphate (MEP). The protein is 2-C-methyl-D-erythritol 4-phosphate cytidylyltransferase of Bifidobacterium longum subsp. infantis (strain ATCC 15697 / DSM 20088 / JCM 1222 / NCTC 11817 / S12).